The chain runs to 267 residues: Ribosomal RNA small subunit methyltransferase A (267 aa).

S-adenosyl-L-methionine is bound by residues Asn16, Leu18, Gly43, Glu64, Asp88, and Asn109.

This sequence belongs to the class I-like SAM-binding methyltransferase superfamily. rRNA adenine N(6)-methyltransferase family. RsmA subfamily.

It localises to the cytoplasm. The catalysed reaction is adenosine(1518)/adenosine(1519) in 16S rRNA + 4 S-adenosyl-L-methionine = N(6)-dimethyladenosine(1518)/N(6)-dimethyladenosine(1519) in 16S rRNA + 4 S-adenosyl-L-homocysteine + 4 H(+). Its function is as follows. Specifically dimethylates two adjacent adenosines (A1518 and A1519) in the loop of a conserved hairpin near the 3'-end of 16S rRNA in the 30S particle. May play a critical role in biogenesis of 30S subunits. This chain is Ribosomal RNA small subunit methyltransferase A, found in Acidithiobacillus ferrooxidans (strain ATCC 23270 / DSM 14882 / CIP 104768 / NCIMB 8455) (Ferrobacillus ferrooxidans (strain ATCC 23270)).